A 153-amino-acid chain; its full sequence is Aspartate carbamoyltransferase regulatory chain (153 aa).

Zn(2+) contacts are provided by cysteine 109, cysteine 114, cysteine 138, and cysteine 141.

The protein belongs to the PyrI family. Contains catalytic and regulatory chains. The cofactor is Zn(2+).

Involved in allosteric regulation of aspartate carbamoyltransferase. The protein is Aspartate carbamoyltransferase regulatory chain of Enterobacter sp. (strain 638).